The primary structure comprises 447 residues: GTPase Der (447 aa).

EngA-type G domains are found at residues 4–165 (QIIA…PKEK) and 180–357 (VQIV…KNWN). Residues 10–17 (GRPNVGKS), 57–61 (DTPGL), 119–122 (NKCE), 186–193 (GRPNAGKS), 233–237 (DTAGL), and 298–301 (NKWD) each bind GTP. Residues 358-443 (KKITTSKLNE…PIRFAYVKTK (86 aa)) enclose the KH-like domain.

It belongs to the TRAFAC class TrmE-Era-EngA-EngB-Septin-like GTPase superfamily. EngA (Der) GTPase family. As to quaternary structure, associates with the 50S ribosomal subunit.

Functionally, GTPase that plays an essential role in the late steps of ribosome biogenesis. The protein is GTPase Der of Rickettsia canadensis (strain McKiel).